Here is a 120-residue protein sequence, read N- to C-terminus: Ribonuclease P protein component 2 (120 aa).

The protein belongs to the eukaryotic/archaeal RNase P protein component 2 family. In terms of assembly, homodimer in solution. Component of RNase P which consists of a catalytic RNA component and at least 5 protein subunits. Forms a heterotetrameric subcomplex with Rnp3. Reconstituted enzyme missing individual protein subunits is suboptimally active, showing each subunit contributes to optimization of activity.

The protein resides in the cytoplasm. It catalyses the reaction Endonucleolytic cleavage of RNA, removing 5'-extranucleotides from tRNA precursor.. Part of ribonuclease P, a protein complex that generates mature tRNA molecules by cleaving their 5'-ends. In Pyrococcus horikoshii (strain ATCC 700860 / DSM 12428 / JCM 9974 / NBRC 100139 / OT-3), this protein is Ribonuclease P protein component 2.